The following is a 666-amino-acid chain: Galactocerebrosidase (666 aa).

The first 22 residues, 1–22 (MIYKLYFAIALCFSLCFDLCIA), serve as a signal peptide directing secretion. Threonine 91 contributes to the substrate binding site. Asparagine 125 carries an N-linked (GlcNAc...) asparagine glycan. Tryptophan 133 and asparagine 179 together coordinate substrate. The active-site Proton donor/acceptor is glutamate 180. Glutamate 256 acts as the Nucleophile in catalysis. A disulfide bridge links cysteine 269 with cysteine 376. A glycan (N-linked (GlcNAc...) asparagine) is linked at asparagine 361. Arginine 378 contacts substrate. Residues asparagine 385, asparagine 390, asparagine 500, and asparagine 540 are each glycosylated (N-linked (GlcNAc...) asparagine).

Belongs to the glycosyl hydrolase 59 family.

Its subcellular location is the lysosome. The catalysed reaction is a beta-D-galactosyl-(1&lt;-&gt;1')-N-acylsphing-4-enine + H2O = an N-acylsphing-4-enine + D-galactose. It catalyses the reaction beta-D-galactosyl-(1&lt;-&gt;1)-sphing-4-enine + H2O = sphing-4-enine + D-galactose. The enzyme catalyses a D-galactosylceramide + H2O = an N-acyl-sphingoid base + D-galactose. Hydrolyzes the galactose ester bonds of glycolipids such as galactosylceramide and galactosylsphingosine. In Salmo salar (Atlantic salmon), this protein is Galactocerebrosidase.